The chain runs to 881 residues: MAASVEHRPFTSHQHGVVRSFKSYPDVPRPKKLPLPQPLSDSTNDNDEEAAVWKELVLKSSAGVEPSIFDPRDDGTSDQWIKRNASMIRLTGKHPFNAEPPLPRLMQHGFITPSPIHYVRSHGPVPHARWEDWTVEVTGLVTRPTCFTMEQLVNDFPSHEFPATLVCAGNRRKEQNMVKQSIGFNWGAGGVSTSVWRGVSLRSLLKRCGIYSRAKGALHVCFEGAEDLPGGGGSNYGTSLMREVALDPSRDIILAYMQNGELLSPDHGFPVRMIIPGFIGGRMVKWLKRIVVSNQQSQSHYHYKDNKLFPSHVDAELANEEDWWYKPEYIINEVNINSVITTPSHQEILPINSWTTQMPYSMRGYAYSGGGRKVTRVEVTLDGGETWQVCSVERLEKPNKYGKYWCWCFWSLEVEVLDILGAKEIAVRAWDEAQNTQPEKLIWNTMGMINNCWFRVKTNVCKPKKGEIGIVFEHPTQPGNQSGGWMAREKQLEKSSESNPILKKSVSSPFMNTATKSYSLSEVRRHNNRDSAWIIVNGHVYDCTRFLKDHPGGEDSILLNAGTDCTEEFEAIHSDKAKKMLEDYRIGELMTTDYTSDSSSSNNSVHGNSETTHLAPIREVALNPREKIPCKLLSKTSISHDVRLLRFALPAEDQVMGLPVGNHVFLCATVDEKLCMRAYTPTSSVDEVGFFDLVVKVYFKGVHPNFPNGGIMSQHLDSLPIGSVVDVKGPLGHIEYTGRGNFLVHGKPRFAKRLTMLAGGTGITPIYQVVQAILKDPEDRTEMYVVYANRTEDDILLKEELDEWAKKHDRLKVWYVLQANIREGWEYSVGFITESILREHVPLASPDTLALTCGPPPMIQFAVQPNLEKLGYDIQNDLLVF.

Positions methionine 1–asparagine 46 are disordered. Position 167 (cysteine 167) interacts with Mo-molybdopterin. The Cytochrome b5 heme-binding domain occupies threonine 515–methionine 590. Histidine 550 and histidine 573 together coordinate heme. Positions arginine 625–threonine 737 constitute an FAD-binding FR-type domain. FAD is bound by residues arginine 677 to threonine 680, valine 694 to tyrosine 698, phenylalanine 699, phenylalanine 706, isoleucine 711 to serine 713, and threonine 764.

It belongs to the nitrate reductase family. In terms of assembly, homodimer. Requires FAD as cofactor. The cofactor is heme. Mo-molybdopterin is required as a cofactor.

It catalyses the reaction nitrite + NAD(+) + H2O = nitrate + NADH + H(+). Nitrate reductase is a key enzyme involved in the first step of nitrate assimilation in plants, fungi and bacteria. The chain is Nitrate reductase [NADH] 1 (NIA1) from Phaseolus vulgaris (Kidney bean).